The primary structure comprises 471 residues: Glutamate--tRNA ligase (471 aa).

A 'HIGH' region motif is present at residues 9–19 (PSPTGYLHVGG). Zn(2+) is bound by residues Cys98, Cys100, Cys125, and His127. Positions 237–241 (KLSKR) match the 'KMSKS' region motif. Lys240 serves as a coordination point for ATP.

The protein belongs to the class-I aminoacyl-tRNA synthetase family. Glutamate--tRNA ligase type 1 subfamily. Monomer. Zn(2+) is required as a cofactor.

The protein resides in the cytoplasm. It carries out the reaction tRNA(Glu) + L-glutamate + ATP = L-glutamyl-tRNA(Glu) + AMP + diphosphate. Its function is as follows. Catalyzes the attachment of glutamate to tRNA(Glu) in a two-step reaction: glutamate is first activated by ATP to form Glu-AMP and then transferred to the acceptor end of tRNA(Glu). This is Glutamate--tRNA ligase from Shigella flexneri.